The primary structure comprises 429 residues: MKKQRNLRSMAAQAVEQVVEQGQSLSNILPPLQQKVSDKDKALLQELCFGVLRTLSQLDWLINKLMARPMTGKQRTVHYLIMVGLYQLLYTRIPPHAALAETVEGAIAIKRPQLKGLINGVLRQFQRQQEELLAEFNTSDARYLHPSWLLKRLQKAYPEQWQSIVEANNQRPPMWLRVNRTHHSRDSWLALLDEAGMKGFPHADYPDAVRLETPAPVHALPGFEDGWVTVQDASAQGCMTWLAPQNGEHILDLCAAPGGKTTHILEVAPEAQVVAVDIDEQRLSRVHDNLKRLGMKATVKQGDGRYPSQWCGEQQFDRILLDAPCSATGVIRRHPDIKWLRRDRDIPELAQLQSEILDAIWPHLKSGGTLVYATCSVLPEENSLQIKAFLQRTADAELCETGTPEQPGKQNLPGAEEGDGFFYAKLIKK.

S-adenosyl-L-methionine contacts are provided by residues 254–260, D277, D303, and D322; that span reads CAAPGGK. Residue C375 is the Nucleophile of the active site.

The protein belongs to the class I-like SAM-binding methyltransferase superfamily. RsmB/NOP family.

The protein localises to the cytoplasm. The enzyme catalyses cytidine(967) in 16S rRNA + S-adenosyl-L-methionine = 5-methylcytidine(967) in 16S rRNA + S-adenosyl-L-homocysteine + H(+). In terms of biological role, specifically methylates the cytosine at position 967 (m5C967) of 16S rRNA. In Shigella sonnei (strain Ss046), this protein is Ribosomal RNA small subunit methyltransferase B.